The chain runs to 323 residues: Acetyl esterase (323 aa).

Positions 91–93 (HGG) match the Involved in the stabilization of the negatively charged intermediate by the formation of the oxyanion hole motif. Active-site residues include S165, D262, and H292.

The protein belongs to the 'GDXG' lipolytic enzyme family. Homodimer. Interacts with MalT and MelA.

It localises to the cytoplasm. In terms of biological role, displays esterase activity towards short chain fatty esters (acyl chain length of up to 8 carbons). Able to hydrolyze triacetylglycerol (triacetin) and tributyrylglycerol (tributyrin), but not trioleylglycerol (triolein) or cholesterol oleate. Negatively regulates MalT activity by antagonizing maltotriose binding. Inhibits MelA galactosidase activity. This Salmonella schwarzengrund (strain CVM19633) protein is Acetyl esterase.